The following is an 80-amino-acid chain: Dolichol-phosphate mannose synthase subunit 2 (80 aa).

The next 2 helical transmembrane spans lie at 10-30 (LLLS…VIIL) and 50-70 (ILVP…FIGM).

Belongs to the DPM2 family. As to quaternary structure, component of the dolichol-phosphate mannose (DPM) synthase complex composed of DPMS1, DPMS2 and DPMS3; in the complex interacts directly with DPMS3. Associates with the GPI-GlcNAc transferase (GPI-GnT) complex.

Its subcellular location is the endoplasmic reticulum membrane. It functions in the pathway protein modification; protein glycosylation. Its function is as follows. Regulates the biosynthesis of dolichol phosphate-mannose. Regulatory subunit of the dolichol-phosphate mannose (DPM) synthase complex; essential for the ER localization and stable expression of DPMS1. This is Dolichol-phosphate mannose synthase subunit 2 from Arabidopsis thaliana (Mouse-ear cress).